The sequence spans 129 residues: Small ribosomal subunit protein uS9 (129 aa).

The protein belongs to the universal ribosomal protein uS9 family.

The chain is Small ribosomal subunit protein uS9 from Gemmatimonas aurantiaca (strain DSM 14586 / JCM 11422 / NBRC 100505 / T-27).